A 311-amino-acid polypeptide reads, in one-letter code: Dihydroorotate dehydrogenase B (NAD(+)), catalytic subunit (311 aa).

FMN contacts are provided by residues Ser-24 and 48 to 49; that span reads KA. Substrate is bound by residues Lys-48 and 72–76; that span reads NAIGL. The FMN site is built by Asn-104 and Asn-132. Residue Asn-132 coordinates substrate. The Nucleophile role is filled by Cys-135. FMN-binding residues include Lys-170 and Ile-196. 197-198 lines the substrate pocket; the sequence is NT. Residues Gly-222, 248–249, and 270–271 contribute to the FMN site; these read GG and GT.

It belongs to the dihydroorotate dehydrogenase family. Type 1 subfamily. In terms of assembly, heterotetramer of 2 PyrK and 2 PyrD type B subunits. Requires FMN as cofactor.

The protein localises to the cytoplasm. The enzyme catalyses (S)-dihydroorotate + NAD(+) = orotate + NADH + H(+). It functions in the pathway pyrimidine metabolism; UMP biosynthesis via de novo pathway; orotate from (S)-dihydroorotate (NAD(+) route): step 1/1. Functionally, catalyzes the conversion of dihydroorotate to orotate with NAD(+) as electron acceptor. Cannot use fumarate as an electron acceptor. This is Dihydroorotate dehydrogenase B (NAD(+)), catalytic subunit (pyrDB) from Lactococcus lactis subsp. cremoris (strain MG1363).